Consider the following 617-residue polypeptide: Arrestin domain-containing protein B (617 aa).

The C2 domain occupies 1–109; it reads MDNRGLRLFI…ATFGQTDKWL (109 aa). Residues Asp-20, Asp-27, Asp-76, Asp-78, and Asp-84 each coordinate Ca(2+).

This sequence belongs to the arrestin family. Ca(2+) is required as a cofactor.

The polypeptide is Arrestin domain-containing protein B (adcB) (Dictyostelium discoideum (Social amoeba)).